A 359-amino-acid polypeptide reads, in one-letter code: DNA polymerase IV (359 aa).

The region spanning 4–185 (IIHIDMDCYF…LSLRKIPGVG (182 aa)) is the UmuC domain. Mg(2+) contacts are provided by aspartate 8 and aspartate 103. Glutamate 104 is an active-site residue.

The protein belongs to the DNA polymerase type-Y family. As to quaternary structure, monomer. It depends on Mg(2+) as a cofactor.

The protein localises to the cytoplasm. The enzyme catalyses DNA(n) + a 2'-deoxyribonucleoside 5'-triphosphate = DNA(n+1) + diphosphate. Poorly processive, error-prone DNA polymerase involved in untargeted mutagenesis. Copies undamaged DNA at stalled replication forks, which arise in vivo from mismatched or misaligned primer ends. These misaligned primers can be extended by PolIV. Exhibits no 3'-5' exonuclease (proofreading) activity. May be involved in translesional synthesis, in conjunction with the beta clamp from PolIII. This is DNA polymerase IV from Shewanella sp. (strain MR-4).